The primary structure comprises 552 residues: Oxygen-dependent choline dehydrogenase (552 aa).

Position 7 to 36 (7 to 36 (DYIIIGAGSAGNVLAARLTEDKDTTVLLLE)) interacts with FAD. His477 serves as the catalytic Proton acceptor.

It belongs to the GMC oxidoreductase family. It depends on FAD as a cofactor.

The enzyme catalyses choline + A = betaine aldehyde + AH2. It catalyses the reaction betaine aldehyde + NAD(+) + H2O = glycine betaine + NADH + 2 H(+). It participates in amine and polyamine biosynthesis; betaine biosynthesis via choline pathway; betaine aldehyde from choline (cytochrome c reductase route): step 1/1. In terms of biological role, involved in the biosynthesis of the osmoprotectant glycine betaine. Catalyzes the oxidation of choline to betaine aldehyde and betaine aldehyde to glycine betaine at the same rate. The chain is Oxygen-dependent choline dehydrogenase from Acinetobacter baumannii (strain AB307-0294).